Reading from the N-terminus, the 255-residue chain is Thiazole synthase (255 aa).

The active-site Schiff-base intermediate with DXP is K96. 1-deoxy-D-xylulose 5-phosphate-binding positions include G157, 184–185 (AG), and 206–207 (NT).

This sequence belongs to the ThiG family. Homotetramer. Forms heterodimers with either ThiH or ThiS.

It localises to the cytoplasm. The catalysed reaction is [ThiS sulfur-carrier protein]-C-terminal-Gly-aminoethanethioate + 2-iminoacetate + 1-deoxy-D-xylulose 5-phosphate = [ThiS sulfur-carrier protein]-C-terminal Gly-Gly + 2-[(2R,5Z)-2-carboxy-4-methylthiazol-5(2H)-ylidene]ethyl phosphate + 2 H2O + H(+). Its pathway is cofactor biosynthesis; thiamine diphosphate biosynthesis. Its function is as follows. Catalyzes the rearrangement of 1-deoxy-D-xylulose 5-phosphate (DXP) to produce the thiazole phosphate moiety of thiamine. Sulfur is provided by the thiocarboxylate moiety of the carrier protein ThiS. In vitro, sulfur can be provided by H(2)S. This chain is Thiazole synthase, found in Clostridium acetobutylicum (strain ATCC 824 / DSM 792 / JCM 1419 / IAM 19013 / LMG 5710 / NBRC 13948 / NRRL B-527 / VKM B-1787 / 2291 / W).